We begin with the raw amino-acid sequence, 329 residues long: Mas-related G-protein coupled receptor member X2 (329 aa).

Over Met-1–Ser-33 the chain is Extracellular. The helical transmembrane segment at Val-34–Leu-54 threads the bilayer. Residues Leu-55–Ala-63 are Cytoplasmic-facing. A helical membrane pass occupies residues Phe-64 to Ile-84. Over Asn-85–Ser-96 the chain is Extracellular. A helical membrane pass occupies residues Ser-97 to Leu-117. The Cytoplasmic segment spans residues Ser-118–His-144. A helical membrane pass occupies residues Leu-145 to Gly-165. Residues Lys-166–Asp-183 are Extracellular-facing. Residues Leu-184–Leu-204 traverse the membrane as a helical segment. Residues Leu-205–Thr-227 are Cytoplasmic-facing. A helical transmembrane segment spans residues Val-228–Ile-248. Residues Trp-249 to Ser-263 lie on the Extracellular side of the membrane. A helical membrane pass occupies residues Val-264–Phe-284. The Cytoplasmic portion of the chain corresponds to Arg-285–Val-329.

Belongs to the G-protein coupled receptor 1 family. Mas subfamily.

The protein resides in the cell membrane. Functionally, mast cell-specific receptor for basic secretagogues, i.e. cationic amphiphilic drugs, as well as endo- or exogenous peptides, consisting of a basic head group and a hydrophobic core. Recognizes and binds small molecules containing a cyclized tetrahydroisoquinoline (THIQ), such as non-steroidal neuromuscular blocking drugs (NMBDs), including tubocurarine and atracurium. In response to these compounds, mediates pseudo-allergic reactions characterized by histamine release, inflammation and airway contraction. This chain is Mas-related G-protein coupled receptor member X2 (MRGPRX2), found in Gorilla gorilla gorilla (Western lowland gorilla).